The primary structure comprises 448 residues: Ribulose bisphosphate carboxylase large chain (448 aa).

Position 4 is an N6,N6,N6-trimethyllysine (Lys4). Substrate-binding residues include Asn113 and Thr163. Residue Lys165 is the Proton acceptor of the active site. Residue Lys167 coordinates substrate. The Mg(2+) site is built by Lys191, Asp193, and Glu194. Residue Lys191 is modified to N6-carboxylysine. Catalysis depends on His284, which acts as the Proton acceptor. Substrate-binding residues include Arg285, His317, and Ser369.

It belongs to the RuBisCO large chain family. Type I subfamily. As to quaternary structure, heterohexadecamer of 8 large chains and 8 small chains; disulfide-linked. The disulfide link is formed within the large subunit homodimers. It depends on Mg(2+) as a cofactor. Post-translationally, the disulfide bond which can form in the large chain dimeric partners within the hexadecamer appears to be associated with oxidative stress and protein turnover.

It is found in the plastid. It localises to the chloroplast. It carries out the reaction 2 (2R)-3-phosphoglycerate + 2 H(+) = D-ribulose 1,5-bisphosphate + CO2 + H2O. The enzyme catalyses D-ribulose 1,5-bisphosphate + O2 = 2-phosphoglycolate + (2R)-3-phosphoglycerate + 2 H(+). RuBisCO catalyzes two reactions: the carboxylation of D-ribulose 1,5-bisphosphate, the primary event in carbon dioxide fixation, as well as the oxidative fragmentation of the pentose substrate in the photorespiration process. Both reactions occur simultaneously and in competition at the same active site. The chain is Ribulose bisphosphate carboxylase large chain from Eucryphia lucida (Leatherwood).